The sequence spans 231 residues: Dephospho-CoA kinase domain-containing protein (231 aa).

In terms of domain architecture, DPCK spans Leu3–Leu207. Residue Gly8 to Ser15 coordinates ATP.

The protein belongs to the CoaE family.

This is Dephospho-CoA kinase domain-containing protein (Dcakd) from Mus musculus (Mouse).